The chain runs to 171 residues: ATP synthase subunit b (171 aa).

A helical membrane pass occupies residues 12–34 (FGLNLNLFETNVINLAVVIFGLY).

Belongs to the ATPase B chain family. In terms of assembly, F-type ATPases have 2 components, F(1) - the catalytic core - and F(0) - the membrane proton channel. F(1) has five subunits: alpha(3), beta(3), gamma(1), delta(1), epsilon(1). F(0) has four main subunits: a(1), b(1), b'(1) and c(10-14). The alpha and beta chains form an alternating ring which encloses part of the gamma chain. F(1) is attached to F(0) by a central stalk formed by the gamma and epsilon chains, while a peripheral stalk is formed by the delta, b and b' chains.

The protein localises to the cellular thylakoid membrane. Functionally, f(1)F(0) ATP synthase produces ATP from ADP in the presence of a proton or sodium gradient. F-type ATPases consist of two structural domains, F(1) containing the extramembraneous catalytic core and F(0) containing the membrane proton channel, linked together by a central stalk and a peripheral stalk. During catalysis, ATP synthesis in the catalytic domain of F(1) is coupled via a rotary mechanism of the central stalk subunits to proton translocation. Its function is as follows. Component of the F(0) channel, it forms part of the peripheral stalk, linking F(1) to F(0). The chain is ATP synthase subunit b from Prochlorococcus marinus (strain MIT 9211).